The sequence spans 211 residues: Ion-translocating oxidoreductase complex subunit G (211 aa).

Residues G9–L29 form a helical membrane-spanning segment. The residue at position 175 (T175) is an FMN phosphoryl threonine.

Belongs to the RnfG family. As to quaternary structure, the complex is composed of six subunits: RnfA, RnfB, RnfC, RnfD, RnfE and RnfG. FMN is required as a cofactor.

Its subcellular location is the cell inner membrane. Its function is as follows. Part of a membrane-bound complex that couples electron transfer with translocation of ions across the membrane. The chain is Ion-translocating oxidoreductase complex subunit G from Vibrio vulnificus (strain YJ016).